We begin with the raw amino-acid sequence, 406 residues long: Tyrosine--tRNA ligase (406 aa).

Y35 contacts L-tyrosine. A 'HIGH' region motif is present at residues 40 to 49 (PTADSLHIGH). 2 residues coordinate L-tyrosine: Y168 and Q172. The short motif at 228–232 (KMGKT) is the 'KMSKS' region element. K231 contributes to the ATP binding site. One can recognise an S4 RNA-binding domain in the interval 340–406 (CSVVELLVDI…KKNYNRIIIK (67 aa)).

The protein belongs to the class-I aminoacyl-tRNA synthetase family. TyrS type 1 subfamily. In terms of assembly, homodimer.

It localises to the cytoplasm. It carries out the reaction tRNA(Tyr) + L-tyrosine + ATP = L-tyrosyl-tRNA(Tyr) + AMP + diphosphate + H(+). In terms of biological role, catalyzes the attachment of tyrosine to tRNA(Tyr) in a two-step reaction: tyrosine is first activated by ATP to form Tyr-AMP and then transferred to the acceptor end of tRNA(Tyr). The sequence is that of Tyrosine--tRNA ligase from Clostridium kluyveri (strain NBRC 12016).